The sequence spans 156 residues: Small ribosomal subunit protein uS7c (156 aa).

Belongs to the universal ribosomal protein uS7 family. Part of the 30S ribosomal subunit.

Its subcellular location is the plastid. The protein localises to the chloroplast. Its function is as follows. One of the primary rRNA binding proteins, it binds directly to 16S rRNA where it nucleates assembly of the head domain of the 30S subunit. This Guillardia theta (Cryptophyte) protein is Small ribosomal subunit protein uS7c (rps7).